The following is a 317-amino-acid chain: Transaldolase (317 aa).

K126 (schiff-base intermediate with substrate) is an active-site residue.

Belongs to the transaldolase family. Type 1 subfamily. Homodimer.

It is found in the cytoplasm. The enzyme catalyses D-sedoheptulose 7-phosphate + D-glyceraldehyde 3-phosphate = D-erythrose 4-phosphate + beta-D-fructose 6-phosphate. The protein operates within carbohydrate degradation; pentose phosphate pathway; D-glyceraldehyde 3-phosphate and beta-D-fructose 6-phosphate from D-ribose 5-phosphate and D-xylulose 5-phosphate (non-oxidative stage): step 2/3. Transaldolase is important for the balance of metabolites in the pentose-phosphate pathway. In Burkholderia cenocepacia (strain ATCC BAA-245 / DSM 16553 / LMG 16656 / NCTC 13227 / J2315 / CF5610) (Burkholderia cepacia (strain J2315)), this protein is Transaldolase.